We begin with the raw amino-acid sequence, 864 residues long: Mitochondrial 15S rRNA processing factor CCM1 (864 aa).

A mitochondrion-targeting transit peptide spans 1–76 (MYMARCGPKN…REFSNTLKER (76 aa)). 2 PPR repeats span residues 319 to 353 (NKQN…STKH) and 356 to 390 (DICT…NIKP).

The protein belongs to the CCM1 family. Binds to mitochondrial small subunit 15S rRNA.

It localises to the mitochondrion. Its function is as follows. Regulates mitochondrial small subunit maturation by controlling 15S rRNA 5'-end processing. Localizes to the 5' precursor of the 15S rRNA in a position that is subsequently occupied by mS47 in the mature yeast mtSSU. Uses structure and sequence-specific RNA recognition, binding to a single-stranded region of the precursor and specifically recognizing bases -6 to -1. The exchange of Ccm1 for mS47 is coupled to the irreversible removal of precursor rRNA that is accompanied by conformational changes of the mitoribosomal proteins uS5m and mS26. These conformational changes signal completion of 5'-end rRNA processing through protection of the mature 5'-end of the 15S rRNA and stabilization of mS47. The removal of the 5' precursor together with the dissociation of Ccm1 may be catalyzed by the 5'-3' exoribonuclease Pet127. Involved in the specific removal of group I introns in mitochondrial encoded transcripts. This chain is Mitochondrial 15S rRNA processing factor CCM1 (CCM1), found in Saccharomyces cerevisiae (strain YJM789) (Baker's yeast).